The primary structure comprises 147 residues: MIQKLKDFKLTPENTYYATGKRKEAVARVWLLRDRPNTFIVGSDKTNKEYDLREYVQRETLYNKIMYPFKVTGHEGKFGIYATVRGGGISAQAEAIMYGVAKALLQHNPDLRPTLKKAGLLTRDAREKERKKYGQMGARAKYRWSKR.

The tract at residues lysine 128–arginine 147 is disordered.

Belongs to the universal ribosomal protein uS9 family.

This is Small ribosomal subunit protein uS9 (rpsI) from Aquifex aeolicus (strain VF5).